A 709-amino-acid polypeptide reads, in one-letter code: Potassium-transporting ATPase ATP-binding subunit (709 aa).

Helical transmembrane passes span 55 to 75 (VMLVVLVGAVITTLAFLRDLA), 86 to 106 (GLVAAFLWFTVLFANFAEAMA), 236 to 256 (IALNILLAGLTIIFLLAVVTL), and 269 to 289 (VVVLVALLVCLIPTTIGALLS). The 4-aspartylphosphate intermediate role is filled by Asp-324. ATP contacts are provided by residues Asp-361, Glu-365, 395 to 402 (FTAETRMS), and Lys-417. Residues Asp-545 and Asp-549 each coordinate Mg(2+). Transmembrane regions (helical) follow at residues 615 to 635 (FAIIPAMFVGLYPVLDKLNVM), 643 to 663 (AILSAVIFNALVIVALIPLAL), and 688 to 708 (GLVVPFIGIKLVDLVIVALGV).

It belongs to the cation transport ATPase (P-type) (TC 3.A.3) family. Type IA subfamily. As to quaternary structure, the system is composed of three essential subunits: KdpA, KdpB and KdpC.

It localises to the cell membrane. It catalyses the reaction K(+)(out) + ATP + H2O = K(+)(in) + ADP + phosphate + H(+). Part of the high-affinity ATP-driven potassium transport (or Kdp) system, which catalyzes the hydrolysis of ATP coupled with the electrogenic transport of potassium into the cytoplasm. This subunit is responsible for energy coupling to the transport system and for the release of the potassium ions to the cytoplasm. This Mycobacterium tuberculosis (strain ATCC 25618 / H37Rv) protein is Potassium-transporting ATPase ATP-binding subunit.